The sequence spans 146 residues: Large ribosomal subunit protein uL15 (146 aa).

Residues 1 to 45 (MTIKLHHLRPAPGSKTERTRVGRGEGSKGKTAGRGTKGTKARKNV) form a disordered region. Over residues 15 to 28 (KTERTRVGRGEGSK) the composition is skewed to basic and acidic residues.

It belongs to the universal ribosomal protein uL15 family. As to quaternary structure, part of the 50S ribosomal subunit.

Functionally, binds to the 23S rRNA. This chain is Large ribosomal subunit protein uL15, found in Mycobacteroides abscessus (strain ATCC 19977 / DSM 44196 / CCUG 20993 / CIP 104536 / JCM 13569 / NCTC 13031 / TMC 1543 / L948) (Mycobacterium abscessus).